The primary structure comprises 72 residues: Translation initiation factor IF-1 (72 aa).

Positions Met1–Arg72 constitute an S1-like domain.

This sequence belongs to the IF-1 family. In terms of assembly, component of the 30S ribosomal translation pre-initiation complex which assembles on the 30S ribosome in the order IF-2 and IF-3, IF-1 and N-formylmethionyl-tRNA(fMet); mRNA recruitment can occur at any time during PIC assembly.

The protein resides in the cytoplasm. In terms of biological role, one of the essential components for the initiation of protein synthesis. Stabilizes the binding of IF-2 and IF-3 on the 30S subunit to which N-formylmethionyl-tRNA(fMet) subsequently binds. Helps modulate mRNA selection, yielding the 30S pre-initiation complex (PIC). Upon addition of the 50S ribosomal subunit IF-1, IF-2 and IF-3 are released leaving the mature 70S translation initiation complex. The chain is Translation initiation factor IF-1 from Treponema denticola (strain ATCC 35405 / DSM 14222 / CIP 103919 / JCM 8153 / KCTC 15104).